The sequence spans 7158 residues: Twitchin (7158 aa).

Ig-like domains are found at residues 5 to 97 (PRFT…INLN) and 111 to 204 (PSFV…LALN). Cystine bridges form between C25-C81 and C132-C188. 4 disordered regions span residues 204–381 (NFEE…PIVL), 473–639 (EEEL…TKLR), 658–732 (KKVK…DSMA), and 763–955 (EVKE…IDMR). Residues 220 to 238 (TASPRPSSRGPGSRPSSPK) are compositionally biased toward low complexity. 2 stretches are compositionally biased toward basic and acidic residues: residues 242 to 259 (KSRE…EGSP) and 279 to 291 (ESRR…KMEV). Composition is skewed to low complexity over residues 319 to 340 (SPST…RKGS) and 347 to 368 (SGTT…ASSD). The Ig-like 3 domain occupies 377 to 466 (PPIVLEASRS…GEGQSSAMVK (90 aa)). A compositionally biased stretch (basic residues) spans 504–513 (RVARRSKSKS). Low complexity predominate over residues 514–523 (KSPAPQAKKS). 2 stretches are compositionally biased toward basic and acidic residues: residues 529-540 (GRQEASEVEHKR) and 601-618 (KTDS…DTLL). Low complexity predominate over residues 620-630 (KTTTSTKNESS). The stretch at 718–764 (VKSGAGGLEKSDSMASLKKLDLKKGKIDDNSDGAFKVQLKKVVKKEV) is one Kelch 1 repeat. Composition is skewed to basic and acidic residues over residues 763–813 (EVKE…DKPK), 837–850 (KEVE…ELKA), 885–897 (KAHD…EGIK), and 917–955 (SESR…IDMR). The Ig-like 4 domain maps to 980–1072 (PKIVEVPENV…DSADVKLLVT (93 aa)). Residues 1088–1118 (SQAGFQKDGEGGGAGGGGGEKKPMTEAERRQ) form a disordered region. Residues 1106–1118 (GEKKPMTEAERRQ) show a composition bias toward basic and acidic residues. 3 consecutive Ig-like domains span residues 1122 to 1213 (PGKK…AQLT), 1217 to 1306 (PPMK…SKVQ), and 1312 to 1398 (PRHT…AQLI). The cysteines at positions 1150 and 1201 are disulfide-linked. 8 Fibronectin type-III domains span residues 1598 to 1690 (PKGP…AKNP), 1696 to 1791 (KPKN…MKAK), 1891 to 1988 (PPKG…IKDP), 1994 to 2087 (KPGR…AKPK), 2189 to 2282 (PNGP…AKNP), 2288 to 2383 (KTGT…AKPR), 2483 to 2576 (PLGP…AKNP), and 2579 to 2675 (VPGK…AKPR). One copy of the Kelch 2 repeat lies at 2014 to 2058 (PPHKDGGAPIEEYIVEVRDPDTKEWKEVKRVPDTNASISGLKEGK). In terms of domain architecture, Ig-like 8 spans 2086 to 2181 (PKFIPAWLKH…GADEEKANLT (96 aa)). The Kelch 3 repeat unit spans residues 2207–2253 (WKPPDDDGGEPIEYYEVEKLDTATGRWVPCAKVKDTKAHIDGLKKGQ). Positions 2266 to 2287 (GASDALSTDKDTKAKNPYDEPG) are enriched in basic and acidic residues. Residues 2266-2295 (GASDALSTDKDTKAKNPYDEPGKTGTPDVV) are disordered. The Kelch 4 repeat unit spans residues 2502-2547 (KVPEDDGGAPIDHYEIEKMDLATGRWVPCGRSETTKTTVPNLQPGH). An Ig-like 9 domain is found at 2679–2763 (PRIHREDLSD…TNINGTDSVT (85 aa)). Fibronectin type-III domains follow at residues 2775-2868 (PKGP…AKNP) and 2874-2968 (RPGR…AKPR). Residues 2793–2839 (WKPPEDDGGEPIEFYEIEKMNTKDGIWVPCGRSGDTHFTVDSLNKGD) form a Kelch 5 repeat. Residues 2849–2901 (NSEGPSDPLETETDILAKNPFDRPDRPGRPEPTDWDSDHVDLKWDPPLSDGGA) are disordered. Residues 2868-2892 (PFDRPDRPGRPEPTDWDSDHVDLKW) are compositionally biased toward basic and acidic residues. An Ig-like 10 domain is found at 2972-3062 (PHIDRDALKN…GEDEATVKIN (91 aa)). Fibronectin type-III domains are found at residues 3070 to 3165 (PNGP…AKDP) and 3171 to 3265 (KTNA…AKAR). The Kelch 6 repeat unit spans residues 3089 to 3134 (RAPDDDGGIPIENYVIEKYDTASGRWVPAAKVAGDKTTAVVDGLIP). The 91-residue stretch at 3268-3358 (PPVIDRNSIQ…GTDTAEVKVT (91 aa)) folds into the Ig-like 11 domain. 2 consecutive Fibronectin type-III domains span residues 3365–3459 (SPRG…AKDP) and 3465–3559 (KPGT…AKPR). A Kelch 7 repeat occupies 3384–3430 (WKEPEDDGGAEISHYVIEKQDAATGRWTACGESKDTNFHVDDLTQGH). Residues 3563 to 3653 (PKINRDMFVA…GKDEHEVDVN (91 aa)) enclose the Ig-like 12 domain. Fibronectin type-III domains follow at residues 3661-3753 (PEGP…AKNP), 3759-3853 (APTD…AKPR), 3954-4047 (PEGP…AKNQ), 4053-4146 (PVDK…TKAR), 4246-4340 (PEGP…AKDP), and 4346-4440 (KPGR…TAKP). One copy of the Kelch 8 repeat lies at 3972–4018 (WKPPTDNGGTDVLHYIVEKMDTSRGTWQEVGTFPDCTAKVNKLVPGK). Kelch repeat units lie at residues 4265-4310 (KPPK…LTEG) and 4365-4410 (DPPR…RVQK). The Ig-like 13 domain maps to 4445-4531 (PKFDLDLDGK…GEAEANIKIT (87 aa)). 8 consecutive Fibronectin type-III domains span residues 4538–4631 (APEN…IKDP), 4637–4733 (APST…CRPY), 4739–4834 (APDA…IEEQ), 4936–5028 (PTGP…AKNP), 5034–5129 (APGQ…ADNA), 5231–5326 (SPQH…VAKY), 5333–5427 (QPEA…LKSR), and 5430–5528 (PPGP…IQES). The stretch at 4557-4602 (DAPKDDGGAEIAGYKIEYQEVGSQIWDKVPGLISGTAYTVRGLEHG) is one Kelch 11 repeat. One copy of the Kelch 12 repeat lies at 5287–5335 (LNYTVGGLIKDNRYRFRVRAETQYGVSEPCELADVVVAKYQFEVPNQPE). The 89-residue stretch at 5533-5621 (PQIVVKPEDT…GSDTATANLV (89 aa)) folds into the Ig-like 14 domain. 2 consecutive Fibronectin type-III domains span residues 5723–5817 (PQGP…ARLP) and 5823–5919 (SPLN…ASGS). The Kelch 13 repeat unit spans residues 5742–5787 (RPPVTDGGSKITSYVVEKRDLSKDEWVTVTSNVKDMNYIVTGLFEN). 2 Ig-like domains span residues 5923–6011 (PKIV…ANLR) and 6016–6107 (PRVF…VNVT). A disulfide bridge links C5944 with C5995. The region spanning 6114-6207 (PPRFPIIENI…PTAPVLIPGD (94 aa)) is the Fibronectin type-III 31 domain. Positions 6261-6516 (YDIHEELGTG…IHQALEHPWL (256 aa)) constitute a Protein kinase domain. ATP-binding positions include 6267 to 6275 (LGTGAFGVV) and K6290. The Proton acceptor role is filled by D6382. The C-terminal regulatory domain (CDR) stretch occupies residues 6517–6581 (TPGNAPGRDS…SIRDAFWDRS (65 aa)). 5 Ig-like domains span residues 6585–6673 (PRFI…VFLN), 6696–6795 (PRVE…CVLT), 6863–6952 (PSFT…ATLT), 6958–7059 (PLLN…ASLV), and 7067–7149 (PPVT…KAIA).

Belongs to the protein kinase superfamily. CAMK Ser/Thr protein kinase family. May interact (via protein kinase and CRD domains) with mak-1 (via protein kinase domain). It depends on Mg(2+) as a cofactor. Post-translationally, phosphorylated by mak-1 on the protein kinase domain and/or CDR domain in vitro. Expressed in body wall, anal, vulval, and pharyngeal muscles (at protein level).

It is found in the cytoplasm. Its subcellular location is the myofibril. It localises to the sarcomere. The protein resides in the a band. It catalyses the reaction L-seryl-[protein] + ATP = O-phospho-L-seryl-[protein] + ADP + H(+). It carries out the reaction L-threonyl-[protein] + ATP = O-phospho-L-threonyl-[protein] + ADP + H(+). Its activity is regulated as follows. Forces generated by the contraction/relaxation cycles of muscle activity separate the regulatory domain from the catalytic core, activating the enzyme. At rest, the kinase domain is in a closed conformation. The active site is occupied by the autoinhibitory region (CDR), which makes extensive contact with the catalytic site, blocking substrate binding. At low forces the regulatory tail will unravel reversibly and expose the active site to its substrates, potentially stabilized by binding of Ca/CALM. At high forces the kinase begins to unfold and the integrity of the active site is disrupted. Functionally, regulator of muscle contraction and relaxation. Senses mechanical strain that occurs during muscle activity by unfolding in clearly resolvable steps at differing forces. Plays a role in the organization of sarcomeres in body wall muscles. The sequence is that of Twitchin from Caenorhabditis elegans.